Consider the following 301-residue polypeptide: Probable 5-dehydro-4-deoxyglucarate dehydratase (301 aa).

The protein belongs to the DapA family.

The catalysed reaction is 5-dehydro-4-deoxy-D-glucarate + H(+) = 2,5-dioxopentanoate + CO2 + H2O. It participates in carbohydrate acid metabolism; D-glucarate degradation; 2,5-dioxopentanoate from D-glucarate: step 2/2. This Chelativorans sp. (strain BNC1) protein is Probable 5-dehydro-4-deoxyglucarate dehydratase.